The sequence spans 33 residues: Cytochrome b6-f complex subunit 8 (33 aa).

A helical transmembrane segment spans residues 2–22 (LFTFAWASLAAIFTFSIAMVV).

This sequence belongs to the PetN family. In terms of assembly, the 4 large subunits of the cytochrome b6-f complex are cytochrome b6, subunit IV (17 kDa polypeptide, PetD), cytochrome f and the Rieske protein, while the 4 small subunits are PetG, PetL, PetM and PetN. The complex functions as a dimer.

It is found in the cellular thylakoid membrane. In terms of biological role, component of the cytochrome b6-f complex, which mediates electron transfer between photosystem II (PSII) and photosystem I (PSI), cyclic electron flow around PSI, and state transitions. The chain is Cytochrome b6-f complex subunit 8 from Prochlorococcus marinus (strain SARG / CCMP1375 / SS120).